A 372-amino-acid chain; its full sequence is MNIMEISKFQSLGDKIRTMLEDHGYLSENNDYEPNPIDGNISISYAYPIKAFEKFLGYYDVENRVAYNPSISMRTDFSYCIAACRYNKNGNEDTVILDGVTDEKYLRKAKFALDYFRKEFRIKGSFDFYIRRYRRYTKAKGLSESSAVAAAVSRALIKNVFGEGPALDDVFVSKYARLVSGSGTRAAHSGISIWLSYPGINLRECAAFRVADDPHDVYYGIFPKYTDIATDSAHSVAVKSIFYASWLEDKYANIKRLIEHNFDIDELLISGENDMLKLNAILFSGGLIIQTGESLRILRAIQDFKKNGDLFFTADTGPSIMVLSRDKSLIEELRQSVEDPYIEGTYNFNRHTRDLNNFTKEANEYFLENKIE.

The protein belongs to the mevalonate 3,5-bisphosphate decarboxylase family. Homodimer.

It catalyses the reaction (R)-3,5-bisphosphomevalonate + H(+) = isopentenyl phosphate + phosphate + CO2. It functions in the pathway isoprenoid biosynthesis; isopentenyl diphosphate biosynthesis via mevalonate pathway. Its function is as follows. Catalyzes the ATP-independent decarboxylation of (R)-mevalonate 3,5-bisphosphate to isopentenyl phosphate. Functions in an alternative mevalonate pathway, only present in extreme acidophiles of the Thermoplasmatales order, which passes through mevalonate 3-phosphate rather than mevalonate 5-phosphate. This chain is Mevalonate 3,5-bisphosphate decarboxylase, found in Thermoplasma volcanium (strain ATCC 51530 / DSM 4299 / JCM 9571 / NBRC 15438 / GSS1).